Consider the following 81-residue polypeptide: MAHTVKIYDTCIGCTQCVRACPTDVLEMVPWDGCKAGQIASSPRTEDCVGCKRCETACPTDFLSIRVYLGAETTRSMGLAY.

4Fe-4S ferredoxin-type domains are found at residues 2-31 (AHTV…MVPW) and 37-68 (GQIA…IRVY). Residues C11, C14, C17, C21, C48, C51, C54, and C58 each coordinate [4Fe-4S] cluster.

As to quaternary structure, the cyanobacterial PSI reaction center is composed of one copy each of PsaA,B,C,D,E,F,I,J,K,L,M and X, and forms trimeric complexes. Requires [4Fe-4S] cluster as cofactor.

Its subcellular location is the cellular thylakoid membrane. It carries out the reaction reduced [plastocyanin] + hnu + oxidized [2Fe-2S]-[ferredoxin] = oxidized [plastocyanin] + reduced [2Fe-2S]-[ferredoxin]. Functionally, apoprotein for the two 4Fe-4S centers FA and FB of photosystem I (PSI); essential for photochemical activity. FB is the terminal electron acceptor of PSI, donating electrons to ferredoxin. The C-terminus interacts with PsaA/B/D and helps assemble the protein into the PSI complex. Required for binding of PsaD and PsaE to PSI. PSI is a plastocyanin/cytochrome c6-ferredoxin oxidoreductase, converting photonic excitation into a charge separation, which transfers an electron from the donor P700 chlorophyll pair to the spectroscopically characterized acceptors A0, A1, FX, FA and FB in turn. This is Photosystem I iron-sulfur center (psaC) from Synechococcus elongatus.